The chain runs to 367 residues: Anhydro-N-acetylmuramic acid kinase (367 aa).

11–18 is an ATP binding site; that stretch reads GTSLDGVD.

It belongs to the anhydro-N-acetylmuramic acid kinase family.

The catalysed reaction is 1,6-anhydro-N-acetyl-beta-muramate + ATP + H2O = N-acetyl-D-muramate 6-phosphate + ADP + H(+). It functions in the pathway amino-sugar metabolism; 1,6-anhydro-N-acetylmuramate degradation. It participates in cell wall biogenesis; peptidoglycan recycling. Catalyzes the specific phosphorylation of 1,6-anhydro-N-acetylmuramic acid (anhMurNAc) with the simultaneous cleavage of the 1,6-anhydro ring, generating MurNAc-6-P. Is required for the utilization of anhMurNAc either imported from the medium or derived from its own cell wall murein, and thus plays a role in cell wall recycling. This chain is Anhydro-N-acetylmuramic acid kinase, found in Chromobacterium violaceum (strain ATCC 12472 / DSM 30191 / JCM 1249 / CCUG 213 / NBRC 12614 / NCIMB 9131 / NCTC 9757 / MK).